Reading from the N-terminus, the 178-residue chain is MSPSGRLCLLTIVGLILPTRGQTLKDTTSSSSADSTIMDIQVPTRAPDAVYTELQPTSPTPTWPADETPQPQTQTQQLEGTDGPLVTDPETHKSTKAAHPTDDTTTLSERPSPSTDVQTDPQTLKPSGFHEDDPFFYDEHTLRKRGLLVAAVLFITGIIILTSGKCRQLSRLCRNRCR.

Positions 1-21 (MSPSGRLCLLTIVGLILPTRG) are cleaved as a signal peptide. Over 22–145 (QTLKDTTSSS…FYDEHTLRKR (124 aa)) the chain is Extracellular. Positions 23–131 (TLKDTTSSSS…QTLKPSGFHE (109 aa)) are disordered. Composition is skewed to low complexity over residues 26-36 (DTTSSSSADST) and 68-77 (TPQPQTQTQQ). The segment covering 103–125 (DTTTLSERPSPSTDVQTDPQTLK) has biased composition (polar residues). Residues 146-164 (GLLVAAVLFITGIIILTSG) form a helical membrane-spanning segment. The Cytoplasmic portion of the chain corresponds to 165 to 178 (KCRQLSRLCRNRCR).

This sequence belongs to the FXYD family. Regulatory subunit of the sodium/potassium-transporting ATPase which is composed of a catalytic alpha subunit, a non-catalytic beta subunit and an additional regulatory subunit. The regulatory subunit, a member of the FXYD protein family, modulates the enzymatic activity in a tissue- and isoform-specific way by changing affinities of the Na+/K+-ATPase toward Na(+), K(+) or ATP. In terms of processing, glycosylated.

The protein localises to the cell membrane. It localises to the basolateral cell membrane. Associates with and regulates the activity of the sodium/potassium-transporting ATPase (NKA) which catalyzes the hydrolysis of ATP coupled with the exchange of Na(+) and K(+) ions across the plasma membrane. May increase NKA activity by increasing the apparent affinity for Na(+). Involved in down-regulation of E-cadherin which results in reduced cell adhesion. Promotes metastasis. This Homo sapiens (Human) protein is FXYD domain-containing ion transport regulator 5 (FXYD5).